The primary structure comprises 680 residues: Galactose oxidase (680 aa).

The N-terminal stretch at 1–24 is a signal peptide; that stretch reads MKHFLSLALCFSSINAVAVTVPHK. A propeptide spanning residues 25 to 41 is cleaved from the precursor; it reads SGGTGSPEGSLQFLSLR. The F5/8 type C domain occupies 42–189; sequence ASAPIGSAIS…SIAEINVFQA (148 aa). An intrachain disulfide couples C59 to C68. Kelch repeat units lie at residues 223 to 268, 279 to 321, 323 to 372, 436 to 490, and 492 to 544; these read RVLM…HDMF, QIVV…TMSD, RVFT…LYRS, KILT…VLPD, and STFI…LLLP. A cross-link (3'-(S-cysteinyl)-tyrosine (Cys-Tyr)) is located at residues 269 to 313; the sequence is CPGISMDGNGQIVVTGGNDAKKTSLYDSSSDSWIPGPDMQVARGY. Y313 serves as a coordination point for Cu cation. Cu cation contacts are provided by Y536 and H537. Y536 serves as the catalytic Proton acceptor. Cysteines 556 and 559 form a disulfide. H622 contacts Cu cation.

In terms of assembly, monomer. Cu(2+) is required as a cofactor. Post-translationally, galactose oxidase contains a protein-derived free radical cofactor. In the active state, Tyr-313, which is cross-linked to Cys-269 via a thioether bond, is oxidized to a radical and acts with Cu(2+) as a two-electron acceptor in the oxidation reaction. The cross-link is believed to modulate the redox potential of the tyrosyl radical, which is further stabilized by a stacking interaction with Trp-331 in the active site. The post-translational formation of the cross-link is closely linked to the propeptide cleavage event, and both are copper-dependent, autocatalytic processes. The propeptide may act as an intramolecular chaperone, facilitating thioester bond formation and copper binding by positioning of active-site residues, including copper ligands.

Its subcellular location is the secreted. It catalyses the reaction D-galactose + O2 = D-galacto-hexodialdose + H2O2. Functionally, catalyzes the sterospecific oxidation of primary alcohols to the corresponding aldehydes. The biologically relevant substrate of the enzyme is not known as the enzyme exhibits broad substrate specificity from small alcohols through sugars to oligo- and polysaccharides. The polypeptide is Galactose oxidase (GAOA) (Gibberella zeae (strain ATCC MYA-4620 / CBS 123657 / FGSC 9075 / NRRL 31084 / PH-1) (Wheat head blight fungus)).